A 355-amino-acid polypeptide reads, in one-letter code: UPF0421 protein BALH_2468 (355 aa).

4 helical membrane-spanning segments follow: residues 19-39 (IAVFLTVLVCEFFNIPTIFAV), 74-94 (FTFFLGHQALSYALAAMFTIV), 109-129 (TLTAVAMIPITADHYFTAFLI), and 131-151 (LATTSTGIIVSTVVNFFILPP).

Belongs to the UPF0421 family.

It is found in the cell membrane. The polypeptide is UPF0421 protein BALH_2468 (Bacillus thuringiensis (strain Al Hakam)).